Reading from the N-terminus, the 130-residue chain is MMRQSRQAVLPEISGNKTSSLRKSICSDLLTLFNSPHSALPSLLVSGMPEWQVHNQSDKHLQSWYCRQLRSALLFHEPRIAALQVNLKEAYSHTLAISLEIMLYHDDEPLTFDLVWDNGGWRSATLENVS.

The protein belongs to the GpW/Gp25 family. IraD subfamily. Interacts with RssB.

The protein localises to the cytoplasm. In terms of biological role, inhibits RpoS proteolysis by regulating RssB activity, thereby increasing the stability of the sigma stress factor RpoS during oxidative stress. Its effect on RpoS stability is due to its interaction with RssB, which probably blocks the interaction of RssB with RpoS, and the consequent delivery of the RssB-RpoS complex to the ClpXP protein degradation pathway. This Escherichia coli O45:K1 (strain S88 / ExPEC) protein is Anti-adapter protein IraD.